A 497-amino-acid polypeptide reads, in one-letter code: MLVKVFSFFILMIIMVIGVSKEYCDDKQSCQNLLLELKAGSSSLSEIRRRDLLIIVLKNSVRRIDMAMIGVMDDTKQHEEMENDMLGVKEDTNLFEEMMESEENSHTWLSSVLTSYITCIDEIGEGAYKRRVEPKLENLISRARVVLALFISISLRDNTELISVIPNGPSWLFHVDKKDLYLNAEIADVVVAKDGTGKYSTVNAAIAAAPQHSQKRFVIYIKTGIYDEIVVIENTKPNLTLIGDGQDLTIITGNLSASNVRRTYNTATVASNGNGFIGVDMCFRNTAGPAKGPAVALRVSGDMSVIYRCRVEGYQDALYPHSDRQFYRECFITGTVDFICGNAVAVFQFCQIVARQPKMGQSNVITAQSRATKDVKSGFSIQNCNITTSSDLDTATVKTYLGRPWRRFSTVAVLQSFIGDLVDPAGWTPWKGETGLSTLHYREYQNRGPGAVTSRRVKWSGFKVMKDPKKATEFTVAKLLDGETWLKESRIPYESGL.

Residues Met1–Lys21 form the signal peptide. N-linked (GlcNAc...) asparagine glycans are attached at residues Asn238 and Asn254. Thr263 is a binding site for substrate. Asp316 acts as the Proton donor in catalysis. Cys330 and Cys350 are joined by a disulfide. Asp337 (nucleophile) is an active-site residue. The N-linked (GlcNAc...) asparagine glycan is linked to Asn385. Substrate-binding residues include Arg403 and Trp405.

It belongs to the pectinesterase family. As to expression, expressed in siliques.

It localises to the secreted. The protein resides in the cell wall. It catalyses the reaction [(1-&gt;4)-alpha-D-galacturonosyl methyl ester](n) + n H2O = [(1-&gt;4)-alpha-D-galacturonosyl](n) + n methanol + n H(+). It participates in glycan metabolism; pectin degradation; 2-dehydro-3-deoxy-D-gluconate from pectin: step 1/5. Functionally, acts in the modification of cell walls via demethylesterification of cell wall pectin. This is Probable pectinesterase 30 (PME30) from Arabidopsis thaliana (Mouse-ear cress).